The chain runs to 432 residues: uncharacterized protein (432 aa).

A Cytochrome c domain is found at 223 to 432 (ASAVRGEALF…KDLIEYLKTR (210 aa)). Positions 236, 239, and 240 each coordinate heme c.

This is an uncharacterized protein from Sinorhizobium fredii (strain NBRC 101917 / NGR234).